Here is a 1383-residue protein sequence, read N- to C-terminus: MAQTLAMMSQFNGRKRVRKFFGKIPEVAEMPNLIEVQKASYDQFLMIKEPKGGRPDEGLQAVFKSVFPISDFSGTAMLEFVRYEFDAPKFDVEECRQRDLTYAAPLKVILRLIVFDIDEDTGSKDIKDIKEQGVYMGDMPLMTSNGTFIINGTERVIVSQMHRSPGVFFDHDKGKSHSSGKVLFAARVIPYRGSWLDIEFDAKDIVYARIDRRRKIPVTSFLMALGMDASDILSTFYNKVTYERVESGWRIPYSVDRFKGVKLVSDLVDAESGEVVAEAGKKLTARTAKLLVEKGLKAIRVSEDELLGSYLADDIVNYETGEIYLEAGDEIDEKVLKVLFDVGANQINILDIDHMSVGAYIRNTLKVDKNESRQDALFDIYRVMRPGEPPTIDTAEAMFHSLFFDSERYDLSAVGRVKMNLRMGLDCPDTVRVLRQEDIIGVVKMLVELRDGRGEIDDIDNLGNRRVRSVGELMENQYRVGLLRMERAIKERMSSVEIDTVMPQDLINAKPAAAAVREFFGSSQLSQFMDQTNPLSEITHKRRLSALGPGGLTRERAGFEVRDVHPTHYGRICPIETPEGPNIGLINSLATFARVNKYGFIESPYRKITDGKVTTEVVYLSAMEEAKHYVAQANSSLDSEGRFTEEFVVCRHAGEVLMVPRDHIDLMDVSPKQLVSVAASLIPFLENDDANRALMGSNMQRQAVPLIRSEAPFVGTGMEAIVARDSGAAISAKRGGIVDQVDATRIVIRATEDLDPSKSGVDIYRLQKFQRSNQSTCINQRPLVHVGDRIEKGDIIADGPSTDLGDLALGRNVLVAFMPWNGYNYEDSILLSERIVADDVFTSIHIEEFEVAARDMKLGPEEITRDIPNVAEEALRNLDEAGIVYIGAEVQPGDILVGKITPKGESPMTPEEKLLRAIFGEKASDVRDTSMRMPPGTFGTVVEVRVFNRHGVEKDERAMEIEREEIERLAKDRDDEQSILDRNVYARLAGMLKDKSAIRGPKGFEKGQKIDSTVLNNYPRSQWWQFAVDDEKVQNKIEALCNQYDESKEALQRRFMDKVEKVQRGDEMPPGVMKMVKVFVAVKRKIQPGDKMAGRHGNKGVVSRILPVEDMPFLEDGTHADIVLNPLGVPSRMNVGQILETHLGWACAGMGKKIGDLVDFYQETGDILPLRQRIENLIPDNDRNEPVRQYDDESLVKLAHQMRKGVSIATPVFDGAHEADINAMLEDAGLDSSGQVTLYDGRTGEPFDRQVTVGYIYMLKLHHLVDDKIHARSIGPYSLVTQQPLGGKAQFGGQRFGEMEVWALEAYGAAYTLQEMLTVKSDDVAGRTKVYEAIVRGDDTFEASIPESFNVLIKEMRSLGLNVKLGDAREFMAQQALPEVVEN.

The protein belongs to the RNA polymerase beta chain family. The RNAP catalytic core consists of 2 alpha, 1 beta, 1 beta' and 1 omega subunit. When a sigma factor is associated with the core the holoenzyme is formed, which can initiate transcription.

The catalysed reaction is RNA(n) + a ribonucleoside 5'-triphosphate = RNA(n+1) + diphosphate. In terms of biological role, DNA-dependent RNA polymerase catalyzes the transcription of DNA into RNA using the four ribonucleoside triphosphates as substrates. This chain is DNA-directed RNA polymerase subunit beta, found in Bartonella bacilliformis (strain ATCC 35685 / KC583 / Herrer 020/F12,63).